The primary structure comprises 377 residues: Carboxynorspermidine/carboxyspermidine decarboxylase (377 aa).

At Lys-41 the chain carries N6-(pyridoxal phosphate)lysine. 2 residues coordinate substrate: Glu-238 and Asp-274.

This sequence belongs to the Orn/Lys/Arg decarboxylase class-II family. NspC subfamily. Homodimer. Pyridoxal 5'-phosphate is required as a cofactor.

The protein resides in the cytoplasm. The catalysed reaction is carboxynorspermidine + H(+) = norspermidine + CO2. It carries out the reaction carboxyspermidine + H(+) = spermidine + CO2. Dithiothreitol greatly stimulates activity, maximum stimulation being at 5-20 mM dithiothreitol concentration. Fe(3+), Fe(2+) and Mn(2+) severely inhibit activity (88%, 82% and 50%, respectively), whereas Zn(2+) has a slightly inhibitory effect (23%) and Mg(2+), Ca(2+), Cu(2+) and Cu(+) have no effect. Its function is as follows. Catalyzes the decarboxylation of carboxynorspermidine and carboxyspermidine. 2,3-diaminopropionic acid, 2,4-diaminobutyric acid, L-ornithine or L-lysine cannot serve as substrates. In Vibrio alginolyticus, this protein is Carboxynorspermidine/carboxyspermidine decarboxylase.